Here is a 156-residue protein sequence, read N- to C-terminus: 6,7-dimethyl-8-ribityllumazine synthase (156 aa).

Residues F22, 57-59 (AYE), and 81-83 (TVI) each bind 5-amino-6-(D-ribitylamino)uracil. Position 86 to 87 (86 to 87 (GT)) interacts with (2S)-2-hydroxy-3-oxobutyl phosphate. H89 functions as the Proton donor in the catalytic mechanism. F114 serves as a coordination point for 5-amino-6-(D-ribitylamino)uracil. R128 lines the (2S)-2-hydroxy-3-oxobutyl phosphate pocket.

Belongs to the DMRL synthase family. As to quaternary structure, forms an icosahedral capsid composed of 60 subunits, arranged as a dodecamer of pentamers.

It carries out the reaction (2S)-2-hydroxy-3-oxobutyl phosphate + 5-amino-6-(D-ribitylamino)uracil = 6,7-dimethyl-8-(1-D-ribityl)lumazine + phosphate + 2 H2O + H(+). Its pathway is cofactor biosynthesis; riboflavin biosynthesis; riboflavin from 2-hydroxy-3-oxobutyl phosphate and 5-amino-6-(D-ribitylamino)uracil: step 1/2. Catalyzes the formation of 6,7-dimethyl-8-ribityllumazine by condensation of 5-amino-6-(D-ribitylamino)uracil with 3,4-dihydroxy-2-butanone 4-phosphate. This is the penultimate step in the biosynthesis of riboflavin. This chain is 6,7-dimethyl-8-ribityllumazine synthase, found in Photorhabdus laumondii subsp. laumondii (strain DSM 15139 / CIP 105565 / TT01) (Photorhabdus luminescens subsp. laumondii).